We begin with the raw amino-acid sequence, 286 residues long: uncharacterized protein (286 aa).

The AB hydrolase-1 domain occupies 26–268 (PLIILCHGFC…DACHYDIYEG (243 aa)).

The protein belongs to the AB hydrolase superfamily.

This is an uncharacterized protein from Escherichia coli.